We begin with the raw amino-acid sequence, 158 residues long: SsrA-binding protein (158 aa).

The protein belongs to the SmpB family.

The protein localises to the cytoplasm. Its function is as follows. Required for rescue of stalled ribosomes mediated by trans-translation. Binds to transfer-messenger RNA (tmRNA), required for stable association of tmRNA with ribosomes. tmRNA and SmpB together mimic tRNA shape, replacing the anticodon stem-loop with SmpB. tmRNA is encoded by the ssrA gene; the 2 termini fold to resemble tRNA(Ala) and it encodes a 'tag peptide', a short internal open reading frame. During trans-translation Ala-aminoacylated tmRNA acts like a tRNA, entering the A-site of stalled ribosomes, displacing the stalled mRNA. The ribosome then switches to translate the ORF on the tmRNA; the nascent peptide is terminated with the 'tag peptide' encoded by the tmRNA and targeted for degradation. The ribosome is freed to recommence translation, which seems to be the essential function of trans-translation. The chain is SsrA-binding protein from Acinetobacter baumannii (strain AB307-0294).